The following is a 180-amino-acid chain: MARRPEADAPPKKQAGPRINEEIRAAKVLLIDENGEKQGVMPLAAALDAAREASMDLVEVSAGQETPVVKILDYGKLRFEERKKKAAARKKQKSSELKEIKIRPNIDTHDYEVKARAIARFFEEGDKVKITLRFRGREMAHQHLGMELLEKVKKDFEETAKVELEPKLEGKQMTMVLAPR.

Belongs to the IF-3 family. Monomer.

The protein localises to the cytoplasm. Its function is as follows. IF-3 binds to the 30S ribosomal subunit and shifts the equilibrium between 70S ribosomes and their 50S and 30S subunits in favor of the free subunits, thus enhancing the availability of 30S subunits on which protein synthesis initiation begins. This Hyphomonas neptunium (strain ATCC 15444) protein is Translation initiation factor IF-3.